We begin with the raw amino-acid sequence, 298 residues long: Centromere protein O (298 aa).

The disordered stretch occupies residues 29-49; the sequence is NISNRKSEEPAVRKKESSLRT. A compositionally biased stretch (basic and acidic residues) spans 33–49; sequence RKSEEPAVRKKESSLRT. Serine 35 bears the Phosphoserine mark. Positions 39-74 form a coiled coil; it reads AVRKKESSLRTKIRELRQQRDKLRAEVKQWGARVKE.

The protein belongs to the CENP-O/MCM21 family. As to quaternary structure, component of the CENPA-CAD complex, composed of CENPI, CENPK, CENPL, CENPO, CENPP, CENPQ, CENPR and CENPS. The CENPA-CAD complex interacts with the CENPA-NAC complex, at least composed of CENPA, CENPC, CENPH, CENPM, CENPN, CENPT and CENPU.

It localises to the nucleus. The protein resides in the chromosome. Its subcellular location is the centromere. The protein localises to the kinetochore. Component of the CENPA-CAD (nucleosome distal) complex, a complex recruited to centromeres which is involved in assembly of kinetochore proteins, mitotic progression and chromosome segregation. May be involved in incorporation of newly synthesized CENPA into centromeres via its interaction with the CENPA-NAC complex. Modulates the kinetochore-bound levels of NDC80 complex. The polypeptide is Centromere protein O (Cenpo) (Mus musculus (Mouse)).